Consider the following 375-residue polypeptide: Chaperone protein DnaJ (375 aa).

The J domain maps to 5–69 (DYYEILGVSK…QKRAAYDQYG (65 aa)). A CR-type zinc finger spans residues 130-208 (GVTKEIRIPT…CHGHGRVEKA (79 aa)). 8 residues coordinate Zn(2+): cysteine 143, cysteine 146, cysteine 160, cysteine 163, cysteine 182, cysteine 185, cysteine 196, and cysteine 199. 4 CXXCXGXG motif repeats span residues 143-150 (CGVCHGSG), 160-167 (CPTCHGQG), 182-189 (CPHCHGRG), and 196-203 (CNSCHGHG).

It belongs to the DnaJ family. In terms of assembly, homodimer. The cofactor is Zn(2+).

Its subcellular location is the cytoplasm. In terms of biological role, participates actively in the response to hyperosmotic and heat shock by preventing the aggregation of stress-denatured proteins and by disaggregating proteins, also in an autonomous, DnaK-independent fashion. Unfolded proteins bind initially to DnaJ; upon interaction with the DnaJ-bound protein, DnaK hydrolyzes its bound ATP, resulting in the formation of a stable complex. GrpE releases ADP from DnaK; ATP binding to DnaK triggers the release of the substrate protein, thus completing the reaction cycle. Several rounds of ATP-dependent interactions between DnaJ, DnaK and GrpE are required for fully efficient folding. Also involved, together with DnaK and GrpE, in the DNA replication of plasmids through activation of initiation proteins. This Serratia proteamaculans (strain 568) protein is Chaperone protein DnaJ.